The sequence spans 181 residues: Acireductone dioxygenase (181 aa).

The Fe(2+) site is built by histidine 97, histidine 99, glutamate 103, and histidine 141. Ni(2+) is bound by residues histidine 97, histidine 99, glutamate 103, and histidine 141.

This sequence belongs to the acireductone dioxygenase (ARD) family. Monomer. Requires Fe(2+) as cofactor. The cofactor is Ni(2+).

It carries out the reaction 1,2-dihydroxy-5-(methylsulfanyl)pent-1-en-3-one + O2 = 3-(methylsulfanyl)propanoate + CO + formate + 2 H(+). The catalysed reaction is 1,2-dihydroxy-5-(methylsulfanyl)pent-1-en-3-one + O2 = 4-methylsulfanyl-2-oxobutanoate + formate + 2 H(+). It functions in the pathway amino-acid biosynthesis; L-methionine biosynthesis via salvage pathway; L-methionine from S-methyl-5-thio-alpha-D-ribose 1-phosphate: step 5/6. In terms of biological role, catalyzes 2 different reactions between oxygen and the acireductone 1,2-dihydroxy-3-keto-5-methylthiopentene (DHK-MTPene) depending upon the metal bound in the active site. Fe-containing acireductone dioxygenase (Fe-ARD) produces formate and 2-keto-4-methylthiobutyrate (KMTB), the alpha-ketoacid precursor of methionine in the methionine recycle pathway. Ni-containing acireductone dioxygenase (Ni-ARD) produces methylthiopropionate, carbon monoxide and formate, and does not lie on the methionine recycle pathway. This Pseudomonas aeruginosa (strain UCBPP-PA14) protein is Acireductone dioxygenase.